Consider the following 3147-residue polypeptide: MEPPNNANTGQLGPTLPNGTVDLPTDLSREITRHFGLEQDEIEEILPCTPFQRDVIECASDDKRRAVGHVVYEIPEDVDTERLAAAWKATVRYTPALRTCIFTSETGNAFQVVLRDCFIFARMYCPSAHLKSAIVKDEATAAVAGPRCNRYVLTGEPNSKRRVLVWTFSHSFVDSAFQGRILQQVLAAYKDEHGRVFSLQPTTDLVESENGDCLSTPASERTVGIERATQFWQEKLHGLDASVFPHLPSHKRVPAIDARADHYLPCPPFIQHEWSSTTVCRTALAILLARYTHSSEALFGVVTEQSHEEHPLLLDGPTSTVVPFRVLCAPNQSVSEVMEAITTYDHDMRQFAHAGLCNISRIGDDASAACGFQTVLMVTDSRTASADEIHHVLEEPEKFIPCTDRALLLSCQMTDEGVLLVARYDQSILEPLQMARFLRQLGFLINKLQSTDGSPCVGQLDVLAPEDRTEIEGWNSEPLQTQDCLIHSEVVKNADDTPNKPAVCAWDGEWTYSELNNVSSRLASYISSLDLGQQLIVPIYLEKSKWVMAAILAVLKAGHAFTLIDPNDPPARTAQIIKQASASIALTSALHQSKMQTVVGRCITVDDDLFQTLTTFEGSQVASAAKPGDLAYVIFTSGSTGDPKGIMIEHRAFYSSVVKFGKALGIRSSTRALQFATHGFGAFLLEVLTTLIHGGCICIPSDHDRMHNIPGFIRQSQINWMMATPSYMTTMKPEDVPGLETLVLVGEQMSSSINDVWLSELQLLDGYGQSESSSICFVGKISDSSRDPNNLGRAIGSHSWIVNPDNPDQLVPIGAIGELLIESPGIARGYLFSQSTETPFLERAPAWYASKQPPYGVKFYRTGDLARYAPDGTVICLGRMDSQVKIRGQRVELDAIENLLRRQFPSDVTVVAEAVKRSDLPSSVVITGFLISSEYVVGAPSTEDTYILDQAVTQEINAKMRQILPAHSIPSFYICMKSLPRTATGKVDRRKLRSIGSSLLALQAQSTAPRSSQAPDASAGVTKLEEVWMDIFNLTPNSHNIGGNFFALGGDSITAIKMVNMARAAGIQLKVSDIFQNPTLASLQAAIGGSSMTVTSIPALALDGPVEQSYSQGRLWFLDQLEIGANWYTIPYAVRLRGPLDVDALNRALLALEKRHETLRTTFEDQDGVGVQIIHETLLDQLRIINADHADYVQLLKQEQTAPFNLASESGWRVSLIRLDDDDNILSIVMHHIISDGWSIDVLRRELGQLYAAALHGADLFGSALSPLPIQYRDFSVWQKQDAQVAEHERQLQYWQKQLADCSPAKLPTDFHRPALLSGKATTVPVTITSELYYRLQEFCSTFNTTSFVVLLATFRAAHYRLTGVDDAVIGTPIANRNRHELENLIGFFVNTQCMRITINEDEETFESLVRQVRSTTTAAFEHEDVPFERVVSAMLPGSRDLSQNPLAQLVFAIHSHKDLGKFELEALESEPLQNEVYTRFDAEFHFFQAPDGLTGYINFATELFKVETIQNVVSVFLQILRHGLEHPQTLISVVPLTDGLAELRSMGLLEIKKVEYPRDSSVVDVFATQVASYPDTLAVVDSSSRLTYAELDHQSDLLATWLRQQNLPTEALVVVLAPRSCETIITFLGILKANLAYLPLDIRSPITRMRDVLSTLPGRTIALLCSDEVAPDFQLPSIELVRIADALEEAAGMTSLNGHEHVPVPSPSPTSLAYVLYTSGSTGRPKGVMIEHRAIVRLARSDIIPDYRPACGDTMAHMFNTAFDGATYEIYTMLLNGGTLVCVDYMDTLSPKSLEAVFKKEQVNATIMAPALLKLYLADARDALKGLDVLISGGDRFDPQDAVDAQSLVRGSCYNGYGPTENGVFSTVYKVDKNDPFVNGVPLGRAVNNSGAYVVDRNQQLVGPGIIGELVVTGDGLARGYTERAFDQNRFIQLKIEGQSVRGYRTGDRVRYRVGEGLIEFFGRMDFQFKIRSNRIEAGEVEAAILSHPAVRNAAVILHVQEKLEPEIVGFVVAEHDDTAEQEEAGDQVEGWQAFFESTTYTELDTVSSSEIGKDFKGWTSMYDGNEIDKAEMQEWLDDTIHTLTDGQALGHVLEIGTGSGMVLFNLGSGLQSFVGLEPSKSAAAFVNNAIKSTPALAGKAHVFVGTATDTNKLDDLHPDLVIFNSVLQYFPTRDYLEQVVDALVHLRSAKRIFFGDVRSYATNRHFLAARAIYTLGNHTTKDEVRKKMAEMEEREEEFLVEPAFFTTLVNRLPDVRHVEIIPKNMQATNELSAYRYAAVVHLRGPDELTRPVHLIKMDDWVDFQASHMHKDALREYLRLAENTKTVAISNIPYGKTIFERQVVESLDDTSEDAPHASLDGAAWISAVRSDAKARSSLSVPDLVLLAKETGFRVEVSAARQWSQSGALDAVFHRYHPAEPDVRTLFQFPTDNDVRMSALLTNQPLQRLQKRRVAVQVREWLQDRIPSYMIPSHIVALDQMPLNTSGKVDRKELSRQAKAIKKVQKSAPPTAPAFPLSEVEVMLCEELTKTFEMDVNITDDFFQLGGHSLLATRLVARISHRLGARLTVKDVFDYPVFSELADIIRQQLASKNTLLPTASAGGGGQDKKESAGVAPTTDMEAMLCEEFANILGMDVGITDNFFDLGGHSLMATRLAARIGHRLNTTISVKDIFSHPVIFQLSAKLEVSQLESSSGGTDIKMPDYTAFQLIPAADAEKFMQDHIYPQINFSQDMVQDVYLATHLQQCFLRDVFGRPKPLVPFYVEFPPDSNPHTLATACTSLVDKYDIFRTIFVEAEGNLYQVVLKHLNLDIDVVETDANVHKTSSDLVDAIAKEPVRLGQPMIQVKVLKQTSSVRVLLWLSHALYDGLSWEHIVRDLHILSKERSLPPATQFSRYMQYVDHTRGPGCDFWRDVLQNAPITNLSDAGSGGRPTKAGDPRVWHAGKVISGPSQAIRSSITQATVFNAACAIVLSKETGTDNVVFGRIVSGRQGLPVRWQNIIGPCTNAVPVRAVVDAHGNHQQMLRDLQEQYLLSLPYETIGFDEIKRSCTDWPDSARNYGCCVTYQNFEYHPESEVDQQRVEMGILAKKAELIKEEPLYNVAIAGEVEPDGVHLQVTVVVDSQLFSQEGATHLMEQVCNTFQALNASL.

The span at 1-12 shows a compositional bias: polar residues; sequence MEPPNNANTGQL. Residues 1–23 are disordered; sequence MEPPNNANTGQLGPTLPNGTVDL. The tract at residues 69-454 is condensation 1; it reads HVVYEIPEDV…INKLQSTDGS (386 aa). The interval 495–887 is adenylation 1; it reads DDTPNKPAVC…GRMDSQVKIR (393 aa). Positions 1015 to 1091 constitute a Carrier 1 domain; that stretch reads PDASAGVTKL…SLQAAIGGSS (77 aa). An O-(pantetheine 4'-phosphoryl)serine modification is found at Ser-1052. The tract at residues 1109-1538 is condensation 2; that stretch reads SYSQGRLWFL…QTLISVVPLT (430 aa). The adenylation 2 stretch occupies residues 1567–1973; sequence FATQVASYPD…GRMDFQFKIR (407 aa). The tract at residues 2041–2181 is S-adenosyl-L-methionine-dependent N-methyltransferase (MT); sequence TYTELDTVSS…FPTRDYLEQV (141 aa). 2 consecutive Carrier domains span residues 2515–2589 and 2615–2689; these read FPLS…RQQL and APTT…EVSQ. Ser-2549 and Ser-2649 each carry O-(pantetheine 4'-phosphoryl)serine. A condensation 3 region spans residues 2735 to 3139; sequence QDVYLATHLQ…THLMEQVCNT (405 aa).

Belongs to the NRP synthetase family.

Functionally, bassianolide nonribosomal synthetase that mediates the biosynthesis of bassianolide (BSL), a non-ribosomal cyclodepsipeptide that shows insecticidal and cancer cell antiproliferative activity. BSLS first catalyzes the iterative synthesis of an enzyme-bound dipeptidol monomer intermediate from D-2-hydroxyisovalerate and L-leucine before performing the condensation and cyclization of 4 dipeptidol monomers to yield the cyclic tetrameric ester bassianolide. The N-methyltransferase MT domain is responsible for the methylation of the leucine residues of bassianolide. BSLS is flexible with both the amino acid and hydroxyl acid precursors, and produces bassianolide as the major product (containing N-methyl-L-Leu), together with small amounts of beauvericin and its analogs beauvericins A-C (containing N-methyl-L-Phe). This chain is Bassianolide nonribosomal cyclodepsipeptide synthetase, found in Beauveria bassiana (strain ARSEF 2860) (White muscardine disease fungus).